A 223-amino-acid polypeptide reads, in one-letter code: Peptidyl-prolyl cis-trans isomerase FKBP16-3, chloroplastic (223 aa).

A chloroplast-targeting transit peptide spans 1–36 (MAASSPSLLLPLGSASRNGLTTKNPNSSRYIAARVI). A thylakoid-targeting transit peptide spans 37 to 76 (ASETREQSCKISNLSSRREAMLLVLGVSGGLSMSSLAAYA). The 93-residue stretch at 124 to 216 (GFQVAANYVA…IFDVSLEFIP (93 aa)) folds into the PPIase FKBP-type domain.

It belongs to the FKBP-type PPIase family.

The protein resides in the plastid. The protein localises to the chloroplast thylakoid lumen. The catalysed reaction is [protein]-peptidylproline (omega=180) = [protein]-peptidylproline (omega=0). PPIases accelerate the folding of proteins. It catalyzes the cis-trans isomerization of proline imidic peptide bonds in oligopeptides. This is Peptidyl-prolyl cis-trans isomerase FKBP16-3, chloroplastic (FKBP16-3) from Arabidopsis thaliana (Mouse-ear cress).